Here is a 116-residue protein sequence, read N- to C-terminus: Large ribosomal subunit protein bL17 (116 aa).

This sequence belongs to the bacterial ribosomal protein bL17 family. As to quaternary structure, part of the 50S ribosomal subunit. Contacts protein L32.

The protein is Large ribosomal subunit protein bL17 of Helicobacter pylori (strain P12).